Consider the following 381-residue polypeptide: cAMP-dependent protein kinase type I-beta regulatory subunit (381 aa).

The interval 1-136 is dimerization and phosphorylation; that stretch reads MASPSCFHSE…ALAKAISKNV (136 aa). Serine 3 carries the phosphoserine modification. Tyrosine 21 carries the 3'-nitrotyrosine modification. The segment at 66 to 88 is disordered; that stretch reads LARQKSNSQCDSHDEEISPTPPN. Phosphoserine occurs at positions 77 and 83. At threonine 85 the chain carries Phosphothreonine. Residues 96 to 100 carry the Pseudophosphorylation motif motif; that stretch reads RRGGV. Arginine 97 carries the omega-N-methylarginine modification. Residues 137–254, glutamate 202, arginine 211, 255–381, glutamate 326, and arginine 335 each bind 3',5'-cyclic AMP; these read LFSH…SKVS and ILES…SLTV.

The protein belongs to the cAMP-dependent kinase regulatory chain family. As to quaternary structure, the inactive holoenzyme is composed of two regulatory chains and two catalytic chains. Activation by cAMP releases the two active catalytic monomers and the regulatory dimer. Interacts with PRKX; regulates this cAMP-dependent protein kinase. Interacts with smAKAP; this interaction may target PRKAR1B to the plasma membrane. The pseudophosphorylation site binds to the substrate-binding region of the catalytic chain, resulting in the inhibition of its activity. As to expression, four types of regulatory chains are found: I-alpha, I-beta, II-alpha, and II-beta. Their expression varies among tissues and is in some cases constitutive and in others inducible.

The protein localises to the cell membrane. In terms of biological role, regulatory subunit of the cAMP-dependent protein kinases involved in cAMP signaling in cells. The protein is cAMP-dependent protein kinase type I-beta regulatory subunit (Prkar1b) of Mus musculus (Mouse).